Consider the following 263-residue polypeptide: 4-hydroxy-tetrahydrodipicolinate reductase (263 aa).

10 to 15 (GASGKM) contributes to the NAD(+) binding site. Position 38 (arginine 38) interacts with NADP(+). Residues 97–99 (GTT) and 123–126 (APNF) each bind NAD(+). Residue histidine 153 is the Proton donor/acceptor of the active site. Histidine 154 contacts (S)-2,3,4,5-tetrahydrodipicolinate. Lysine 157 serves as the catalytic Proton donor. 163-164 (GT) lines the (S)-2,3,4,5-tetrahydrodipicolinate pocket.

Belongs to the DapB family.

It is found in the cytoplasm. The catalysed reaction is (S)-2,3,4,5-tetrahydrodipicolinate + NAD(+) + H2O = (2S,4S)-4-hydroxy-2,3,4,5-tetrahydrodipicolinate + NADH + H(+). The enzyme catalyses (S)-2,3,4,5-tetrahydrodipicolinate + NADP(+) + H2O = (2S,4S)-4-hydroxy-2,3,4,5-tetrahydrodipicolinate + NADPH + H(+). Its pathway is amino-acid biosynthesis; L-lysine biosynthesis via DAP pathway; (S)-tetrahydrodipicolinate from L-aspartate: step 4/4. Its function is as follows. Catalyzes the conversion of 4-hydroxy-tetrahydrodipicolinate (HTPA) to tetrahydrodipicolinate. This chain is 4-hydroxy-tetrahydrodipicolinate reductase, found in Dehalococcoides mccartyi (strain ATCC BAA-2266 / KCTC 15142 / 195) (Dehalococcoides ethenogenes (strain 195)).